Consider the following 353-residue polypeptide: Protein RecA (353 aa).

G73–T80 contacts ATP.

Belongs to the RecA family.

The protein resides in the cytoplasm. Its function is as follows. Can catalyze the hydrolysis of ATP in the presence of single-stranded DNA, the ATP-dependent uptake of single-stranded DNA by duplex DNA, and the ATP-dependent hybridization of homologous single-stranded DNAs. It interacts with LexA causing its activation and leading to its autocatalytic cleavage. This Bordetella avium (strain 197N) protein is Protein RecA.